The sequence spans 49 residues: MAVKKAALACSVCGSRNYSITASKNRTKRLELKKFCKHCGKMTLHKETR.

This sequence belongs to the bacterial ribosomal protein bL33 family.

The chain is Large ribosomal subunit protein bL33B from Lactobacillus helveticus (strain DPC 4571).